The sequence spans 232 residues: 7-cyano-7-deazaguanine synthase (232 aa).

8–18 (FSGGQDSTTCL) contributes to the ATP binding site. Residues Cys189, Cys198, Cys201, and Cys204 each contribute to the Zn(2+) site.

This sequence belongs to the QueC family. The cofactor is Zn(2+).

The enzyme catalyses 7-carboxy-7-deazaguanine + NH4(+) + ATP = 7-cyano-7-deazaguanine + ADP + phosphate + H2O + H(+). It participates in purine metabolism; 7-cyano-7-deazaguanine biosynthesis. Its function is as follows. Catalyzes the ATP-dependent conversion of 7-carboxy-7-deazaguanine (CDG) to 7-cyano-7-deazaguanine (preQ(0)). The protein is 7-cyano-7-deazaguanine synthase of Yersinia pseudotuberculosis serotype O:1b (strain IP 31758).